Reading from the N-terminus, the 136-residue chain is MGKIVITVGKRKRAIARAVAREGKGRIRINKIPIELIEPKYKRMKLMEPILLAGEEVISQMDIDVTVKGGGVMGQMDAARTAIGKAIVEFTGSKELRDKFLAYDRTLLVSDARRTEPHKPSRSTKGPRAKRQKSYR.

The tract at residues 111-136 (DARRTEPHKPSRSTKGPRAKRQKSYR) is disordered. Over residues 120-136 (PSRSTKGPRAKRQKSYR) the composition is skewed to basic residues.

The protein belongs to the universal ribosomal protein uS9 family.

This chain is Small ribosomal subunit protein uS9 (rps9), found in Methanocaldococcus jannaschii (strain ATCC 43067 / DSM 2661 / JAL-1 / JCM 10045 / NBRC 100440) (Methanococcus jannaschii).